Reading from the N-terminus, the 403-residue chain is F-box only protein 22 (403 aa).

At methionine 1 the chain carries N-acetylmethionine. The 53-residue stretch at 19 to 71 (STFVLSNLAEVVERVLTFLPAKALLRVACVCRLWRECVRRVLRTHRSVTWISA) folds into the F-box domain. A Phosphoserine modification is found at serine 128. Lysine 194 carries the post-translational modification N6-acetyllysine.

Directly interacts with SKP1 and CUL1.

The protein resides in the cytoplasm. It localises to the myofibril. Its subcellular location is the sarcomere. It is found in the z line. Its function is as follows. Substrate-recognition component of the SCF (SKP1-CUL1-F-box protein)-type E3 ubiquitin ligase complex. Promotes the proteasome-dependent degradation of key sarcomeric proteins, such as alpha-actinin (ACTN2) and filamin-C (FLNC), essential for maintenance of normal contractile function. The polypeptide is F-box only protein 22 (FBXO22) (Pongo abelii (Sumatran orangutan)).